The chain runs to 2564 residues: Histone-lysine N-methyltransferase SETD2 (2564 aa).

The segment covering 1–11 (MKQLQPQPPPK) has biased composition (pro residues). Residues 1–30 (MKQLQPQPPPKMGDFYDPEHPTPEEEENEA) form a disordered region. A compositionally biased stretch (basic and acidic residues) spans 17 to 30 (DPEHPTPEEEENEA). Residue Ser-131 is modified to Phosphoserine. Disordered stretches follow at residues 180–211 (STTVDSPPSSPPPPPPPAQATTLSSPAPVTEP), 272–561 (NEQA…TLSK), and 607–626 (PEREKAGSPAPSNRLNDSPT). A compositionally biased stretch (pro residues) spans 187–197 (PSSPPPPPPPA). Positions 198–207 (QATTLSSPAP) are enriched in low complexity. The span at 278 to 290 (SSKKEDSHIGKDE) shows a compositional bias: basic and acidic residues. Ser-321, Ser-323, and Ser-344 each carry phosphoserine. Basic and acidic residues-rich tracts occupy residues 335–400 (RSHD…ERER), 421–432 (RSERSHYYDSDR), 439–467 (PYRERTRYSRPYTDNRARESSDSEEEYKK), and 479–528 (SYRD…EAIK). Lys-359 participates in a covalent cross-link: Glycyl lysine isopeptide (Lys-Gly) (interchain with G-Cter in SUMO2). Ser-422 carries the phosphoserine modification. A phosphoserine mark is found at Ser-532, Ser-614, and Ser-624. Positions 616 to 625 (APSNRLNDSP) are enriched in polar residues. Residue Thr-626 is modified to Phosphothreonine. Residue Lys-637 forms a Glycyl lysine isopeptide (Lys-Gly) (interchain with G-Cter in SUMO2) linkage. Phosphoserine occurs at positions 698, 708, 744, and 754. Residue Lys-776 forms a Glycyl lysine isopeptide (Lys-Gly) (interchain with G-Cter in SUMO2) linkage. 5 disordered regions span residues 964–995 (EEGNSILPERRGRPEISLDERGEGGHVHTSDD), 1036–1101 (EDYS…SDHW), 1133–1233 (LHKG…LGKT), 1264–1352 (QEKP…FSDQ), and 1393–1443 (LEKN…PGSA). Positions 971 to 994 (PERRGRPEISLDERGEGGHVHTSD) are enriched in basic and acidic residues. The segment covering 1045–1058 (SNDESDSEDTDSDD) has biased composition (acidic residues). The segment covering 1084 to 1095 (SPCSSRSSQSYR) has biased composition (low complexity). Ser-1098 is subject to Phosphoserine. The segment covering 1162–1171 (HPQSDGVDST) has biased composition (polar residues). A compositionally biased stretch (basic and acidic residues) spans 1172-1191 (SHTDVKSDPLGHPNSEETVK). Over residues 1215-1225 (KSWQQTTFQNR) the composition is skewed to polar residues. Phosphoserine is present on Ser-1228. Residues 1265 to 1276 (EKPSTTYQQPDS) are compositionally biased toward polar residues. Residues 1393-1403 (LEKNDIKDRGP) show a composition bias toward basic and acidic residues. 3 positions are modified to phosphoserine: Ser-1413, Ser-1415, and Ser-1417. The segment at 1418-1714 (DGELQDRKKV…KKERSRKKDS (297 aa)) is interaction with TUBA1A. A compositionally biased stretch (basic and acidic residues) spans 1421–1431 (LQDRKKVRVEV). Residues 1494-1548 (IKRMQCECTPLSKDERAQGEIACGEDCLNRLLMIECSSRCPNGDYCSNRRFQRKQ) enclose the AWS domain. Positions 1499, 1501, 1516, 1520, 1529, 1533, and 1539 each coordinate Zn(2+). Residues 1550–1667 (ADVEVILTEK…SGSELTFDYQ (118 aa)) enclose the SET domain. S-adenosyl-L-methionine is bound by residues 1560–1562 (KGW), 1603–1605 (HYY), and 1628–1629 (NH). Cys-1631 serves as a coordination point for Zn(2+). Residues 1674–1690 (EAQKCFCGSANCRGYLG) form the Post-SET domain. Gln-1676 is an S-adenosyl-L-methionine binding site. Cys-1678 serves as a coordination point for Zn(2+). Phe-1679 contributes to the S-adenosyl-L-methionine binding site. Zn(2+)-binding residues include Cys-1680 and Cys-1685. Phosphoserine is present on residues Ser-1696, Ser-1844, and Ser-1845. The tract at residues 1831–1872 (KTAVPPLSEGDGYSSENTSRAHTPLNTPDPSTKLSTEADTDT) is disordered. Polar residues predominate over residues 1844 to 1867 (SSENTSRAHTPLNTPDPSTKLSTE). Phosphothreonine occurs at positions 1853 and 1872. Residue Ser-1888 is modified to Phosphoserine. Residues 1921-2142 (EELQSQQLLP…EAQKQQQQMQ (222 aa)) are disordered. Residues 1924 to 1935 (QSQQLLPQQLPE) are compositionally biased toward low complexity. A Phosphoserine modification is found at Ser-1952. Residues 1960 to 1972 (IEPKESNGTKLEE) are compositionally biased toward basic and acidic residues. Residues 1973–1990 (PINEETPSQDEEEGVSDV) show a composition bias toward acidic residues. Phosphoserine occurs at positions 1980, 1988, and 1995. Basic and acidic residues-rich tracts occupy residues 1991–2004 (ESERSQEQPDKTVD), 2014–2046 (DSWKDLKEVYRIPKKSQTEKENTTTERGRDAVG), and 2059–2072 (RSRERDPDKQTQNK). Ser-2080 and Ser-2082 each carry phosphoserine. Composition is skewed to basic and acidic residues over residues 2090–2100 (RGTKRPDDRYD) and 2111–2135 (KDRNKLSTEERRKLFEQEVAQREAQ). A coiled-coil region spans residues 2117 to 2146 (STEERRKLFEQEVAQREAQKQQQQMQNLGM). The segment at 2137-2366 (QQQQMQNLGM…APGQPQPLQP (230 aa)) is low charge region. Residues 2389-2422 (IVLPPNWKTARDPEGKIYYYHVITRQTQWDPPTW) form the WW domain. Residues 2439-2465 (LGTPTYDENPMKASKKPKTAEADTSSE) form a disordered region. The tract at residues 2457–2564 (TAEADTSSEL…YKPKEDTELE (108 aa)) is interaction with POLR2A.

It belongs to the class V-like SAM-binding methyltransferase superfamily. Histone-lysine methyltransferase family. SET2 subfamily. In terms of assembly, specifically interacts with hyperphosphorylated C-terminal domain (CTD) of RNA polymerase II large subunit (POLR2A): binds to CTD heptad repeats doubly phosphorylated on 'Ser-2' and 'Ser-5' of each heptad. Interacts with HTT. Interacts with IWS1. Interacts with p53/TP53; leading to regulate p53/TP53 target genes. Component of a complex with HNRNPL. Interacts with TUBA1A; the interaction is independent on alpha-tubulin acetylation on 'Lys-40'. Interacts with STAT1. Post-translationally, may be automethylated. Ubiquitously expressed.

The protein resides in the nucleus. It is found in the chromosome. It catalyses the reaction L-lysyl(36)-[histone H3] + 3 S-adenosyl-L-methionine = N(6),N(6),N(6)-trimethyl-L-lysyl(36)-[histone H3] + 3 S-adenosyl-L-homocysteine + 3 H(+). It carries out the reaction L-lysyl-[protein] + S-adenosyl-L-methionine = N(6)-methyl-L-lysyl-[protein] + S-adenosyl-L-homocysteine + H(+). The catalysed reaction is L-lysyl-[protein] + 3 S-adenosyl-L-methionine = N(6),N(6),N(6)-trimethyl-L-lysyl-[protein] + 3 S-adenosyl-L-homocysteine + 3 H(+). Its activity is regulated as follows. Specifically inhibited by sinefungin derivatives. N-propyl sinefungin (Pr-SNF) interacts preferentially with SETD2. Histone methyltransferase that specifically trimethylates 'Lys-36' of histone H3 (H3K36me3) using dimethylated 'Lys-36' (H3K36me2) as substrate. It is capable of trimethylating unmethylated H3K36 (H3K36me0) in vitro. Represents the main enzyme generating H3K36me3, a specific tag for epigenetic transcriptional activation. Plays a role in chromatin structure modulation during elongation by coordinating recruitment of the FACT complex and by interacting with hyperphosphorylated POLR2A. Acts as a key regulator of DNA mismatch repair in G1 and early S phase by generating H3K36me3, a mark required to recruit MSH6 subunit of the MutS alpha complex: early recruitment of the MutS alpha complex to chromatin to be replicated allows a quick identification of mismatch DNA to initiate the mismatch repair reaction. Required for DNA double-strand break repair in response to DNA damage: acts by mediating formation of H3K36me3, promoting recruitment of RAD51 and DNA repair via homologous recombination (HR). Acts as a tumor suppressor. H3K36me3 also plays an essential role in the maintenance of a heterochromatic state, by recruiting DNA methyltransferase DNMT3A. H3K36me3 is also enhanced in intron-containing genes, suggesting that SETD2 recruitment is enhanced by splicing and that splicing is coupled to recruitment of elongating RNA polymerase. Required during angiogenesis. Required for endoderm development by promoting embryonic stem cell differentiation toward endoderm: acts by mediating formation of H3K36me3 in distal promoter regions of FGFR3, leading to regulate transcription initiation of FGFR3. In addition to histones, also mediates methylation of other proteins, such as tubulins and STAT1. Trimethylates 'Lys-40' of alpha-tubulins such as TUBA1B (alpha-TubK40me3); alpha-TubK40me3 is required for normal mitosis and cytokinesis and may be a specific tag in cytoskeletal remodeling. Involved in interferon-alpha-induced antiviral defense by mediating both monomethylation of STAT1 at 'Lys-525' and catalyzing H3K36me3 on promoters of some interferon-stimulated genes (ISGs) to activate gene transcription. Its function is as follows. (Microbial infection) Recruited to the promoters of adenovirus 12 E1A gene in case of infection, possibly leading to regulate its expression. This chain is Histone-lysine N-methyltransferase SETD2 (SETD2), found in Homo sapiens (Human).